Reading from the N-terminus, the 640-residue chain is Threonine--tRNA ligase (640 aa).

Residues 1-61 form the TGS domain; sequence MPIITLPDGN…EKDSEVNIIT (61 aa). The segment at 242–533 is catalytic; it reads DHRRIAKQMS…LIEHYAGRMP (292 aa). Zn(2+) contacts are provided by Cys333, His384, and His510.

Belongs to the class-II aminoacyl-tRNA synthetase family. Homodimer. Zn(2+) is required as a cofactor.

It localises to the cytoplasm. The enzyme catalyses tRNA(Thr) + L-threonine + ATP = L-threonyl-tRNA(Thr) + AMP + diphosphate + H(+). Functionally, catalyzes the attachment of threonine to tRNA(Thr) in a two-step reaction: L-threonine is first activated by ATP to form Thr-AMP and then transferred to the acceptor end of tRNA(Thr). Also edits incorrectly charged L-seryl-tRNA(Thr). The protein is Threonine--tRNA ligase of Prochlorococcus marinus (strain MIT 9303).